An 810-amino-acid polypeptide reads, in one-letter code: Type I restriction enzyme EcoAI endonuclease subunit (810 aa).

One can recognise a Helicase ATP-binding domain in the interval 183-343; the sequence is EAVSNGQNRV…TDYFGDPVYV (161 aa). 197–203 lines the ATP pocket; it reads ATGTGKT. One can recognise a Helicase C-terminal domain in the interval 412–575; sequence TITDYLKRTN…DIADPESDFE (164 aa). Positions 578–588 are enriched in acidic residues; it reads LEEISEHDEEQ. A disordered region spans residues 578–608; sequence LEEISEHDEEQVTGVDEPPAPPYQVTDTDDV.

The protein belongs to the HsdR family. As to quaternary structure, the type I restriction/modification system is composed of three polypeptides R, M and S. The restriction enzyme has stoichiometry R(2)M(2)S(1) while the methyltransferase is M(2)S(1).

The catalysed reaction is Endonucleolytic cleavage of DNA to give random double-stranded fragments with terminal 5'-phosphates, ATP is simultaneously hydrolyzed.. Functionally, the subtype B restriction (R) subunit of a type I restriction enzyme that recognizes 5'-GAGN(7)GTCA-3' and cleaves a random distance away. Subunit R is required for both nuclease and ATPase activities, but not for modification. After locating a non-methylated recognition site, the enzyme complex serves as a molecular motor that translocates DNA in an ATP-dependent manner until a collision occurs that triggers cleavage. This Escherichia coli protein is Type I restriction enzyme EcoAI endonuclease subunit.